A 98-amino-acid chain; its full sequence is Ferredoxin-like protein (98 aa).

This sequence to ferredoxins from P.putida and C.tartarivorum, ferredoxin I from A.vinelandii, ferredoxin II from D.desulfuricans.

In terms of biological role, could be a 3Fe-4S cluster-containing protein. In Rhizobium leguminosarum bv. trifolii, this protein is Ferredoxin-like protein (fixX).